Consider the following 488-residue polypeptide: Probable glycine dehydrogenase (decarboxylating) subunit 2 (488 aa).

At Lys274 the chain carries N6-(pyridoxal phosphate)lysine.

Belongs to the GcvP family. C-terminal subunit subfamily. In terms of assembly, the glycine cleavage system is composed of four proteins: P, T, L and H. In this organism, the P 'protein' is a heterodimer of two subunits. Pyridoxal 5'-phosphate is required as a cofactor.

It catalyses the reaction N(6)-[(R)-lipoyl]-L-lysyl-[glycine-cleavage complex H protein] + glycine + H(+) = N(6)-[(R)-S(8)-aminomethyldihydrolipoyl]-L-lysyl-[glycine-cleavage complex H protein] + CO2. Its function is as follows. The glycine cleavage system catalyzes the degradation of glycine. The P protein binds the alpha-amino group of glycine through its pyridoxal phosphate cofactor; CO(2) is released and the remaining methylamine moiety is then transferred to the lipoamide cofactor of the H protein. The sequence is that of Probable glycine dehydrogenase (decarboxylating) subunit 2 from Listeria welshimeri serovar 6b (strain ATCC 35897 / DSM 20650 / CCUG 15529 / CIP 8149 / NCTC 11857 / SLCC 5334 / V8).